Reading from the N-terminus, the 244-residue chain is MRLKTLKFPFVNKKNTRTFKKKCGRFLSYFIGLTVALTFLFRFVPIPFSAYMAEQKLAHIIQLDFDYKVNYDWISLEDISPYMQLAVIAAEDQNFPNHGGFDWNAIKSAIKYNEKSSRIRGASTISQQTAKNMFLWHGQSWIRKGIEVPVTFMLETLWSKKRILEVYLNIAEFGNGIFGVEAASRYYFKKPAKRLTQSEAALLAAVLPNPIIYKANRPSLLVRKKQAWIIRQMNSLGLNYLKKL.

The helical transmembrane segment at 26 to 46 threads the bilayer; sequence FLSYFIGLTVALTFLFRFVPI.

Belongs to the glycosyltransferase 51 family.

The protein resides in the cell inner membrane. The enzyme catalyses [GlcNAc-(1-&gt;4)-Mur2Ac(oyl-L-Ala-gamma-D-Glu-L-Lys-D-Ala-D-Ala)](n)-di-trans,octa-cis-undecaprenyl diphosphate + beta-D-GlcNAc-(1-&gt;4)-Mur2Ac(oyl-L-Ala-gamma-D-Glu-L-Lys-D-Ala-D-Ala)-di-trans,octa-cis-undecaprenyl diphosphate = [GlcNAc-(1-&gt;4)-Mur2Ac(oyl-L-Ala-gamma-D-Glu-L-Lys-D-Ala-D-Ala)](n+1)-di-trans,octa-cis-undecaprenyl diphosphate + di-trans,octa-cis-undecaprenyl diphosphate + H(+). The protein operates within cell wall biogenesis; peptidoglycan biosynthesis. Peptidoglycan polymerase that catalyzes glycan chain elongation from lipid-linked precursors. This is Biosynthetic peptidoglycan transglycosylase from Mannheimia succiniciproducens (strain KCTC 0769BP / MBEL55E).